Here is a 373-residue protein sequence, read N- to C-terminus: PqqA peptide cyclase (373 aa).

In terms of domain architecture, Radical SAM core spans 9 to 224 (LTKPRWLLAE…QSYKEKVKGR (216 aa)). The [4Fe-4S] cluster site is built by Cys23, Cys27, and Cys30.

The protein belongs to the radical SAM superfamily. PqqE family. As to quaternary structure, interacts with PqqD. The interaction is necessary for activity of PqqE. Requires [4Fe-4S] cluster as cofactor.

The catalysed reaction is [PQQ precursor protein] + S-adenosyl-L-methionine = E-Y cross-linked-[PQQ precursor protein] + 5'-deoxyadenosine + L-methionine + H(+). The protein operates within cofactor biosynthesis; pyrroloquinoline quinone biosynthesis. Functionally, catalyzes the cross-linking of a glutamate residue and a tyrosine residue in the PqqA protein as part of the biosynthesis of pyrroloquinoline quinone (PQQ). The protein is PqqA peptide cyclase of Methylococcus capsulatus (strain ATCC 33009 / NCIMB 11132 / Bath).